The sequence spans 255 residues: MKIGVFDSGVGGFSVLKSLLKAQIFDEIIYYGDSARVPYGTKDPTTIKQFGLEALDFFKPHQIKLLIVACNTASALALEEMQKHSKIPIVGVIEPSILAIKQQVKDKNAPILVLGTKATIQSNAYDNALKQQGYLNVSHLATSLFVPLIEESILEGELLETCMRYYFTPLEILPEVVILGCTHFPLIAQKIEGYFMEHFALSTPPLLIHSGDAIVGYLQQKYALKKNACAFPKVEFHASGDVVWLEKQAKEWLKL.

Residues 7–8 (DS) and 39–40 (YG) each bind substrate. C70 functions as the Proton donor/acceptor in the catalytic mechanism. 71-72 (NT) provides a ligand contact to substrate. The active-site Proton donor/acceptor is C181. Residue 182-183 (TH) coordinates substrate.

Belongs to the aspartate/glutamate racemases family.

The enzyme catalyses L-glutamate = D-glutamate. Its pathway is cell wall biogenesis; peptidoglycan biosynthesis. In terms of biological role, provides the (R)-glutamate required for cell wall biosynthesis. This chain is Glutamate racemase, found in Helicobacter pylori (strain HPAG1).